Consider the following 247-residue polypeptide: UPF0246 protein LSEI_2080 (247 aa).

This sequence belongs to the UPF0246 family.

This is UPF0246 protein LSEI_2080 from Lacticaseibacillus paracasei (strain ATCC 334 / BCRC 17002 / CCUG 31169 / CIP 107868 / KCTC 3260 / NRRL B-441) (Lactobacillus paracasei).